The chain runs to 121 residues: Large ribosomal subunit protein uL18 (121 aa).

It belongs to the universal ribosomal protein uL18 family. As to quaternary structure, part of the 50S ribosomal subunit; part of the 5S rRNA/L5/L18/L25 subcomplex. Contacts the 5S and 23S rRNAs.

Functionally, this is one of the proteins that bind and probably mediate the attachment of the 5S RNA into the large ribosomal subunit, where it forms part of the central protuberance. In Ureaplasma parvum serovar 3 (strain ATCC 27815 / 27 / NCTC 11736), this protein is Large ribosomal subunit protein uL18.